The chain runs to 404 residues: Pre-heme d1 synthase (404 aa).

In terms of domain architecture, Radical SAM core spans 22–235 (GTPKPVVIWN…LIARALESAE (214 aa)). 7 residues coordinate [4Fe-4S] cluster: C36, C40, C43, C340, C343, C349, and C371.

It belongs to the radical SAM superfamily. [4Fe-4S] cluster is required as a cofactor.

Its pathway is porphyrin-containing compound metabolism. Functionally, involved in heme d1 biosynthesis. Radical SAM enzyme that catalyzes the removal of two propionate side chains from the intermediate 12,18-didecarboxysiroheme (DDSH) and may introduce the keto functions on rings A and B, yielding the heme d1 precursor dihydro-heme d1. The chain is Pre-heme d1 synthase from Dinoroseobacter shibae (strain DSM 16493 / NCIMB 14021 / DFL 12).